Consider the following 187-residue polypeptide: Interferon alpha-3 (187 aa).

Residues 1-23 (MALPCSFSVALVLLSCHSLCCLA) form the signal peptide. Cystine bridges form between Cys-24-Cys-122 and Cys-52-Cys-160. N-linked (GlcNAc...) asparagine glycosylation is found at Asn-94 and Asn-101.

The protein belongs to the alpha/beta interferon family.

The protein resides in the secreted. Produced by macrophages, IFN-alpha have antiviral activities. Interferon stimulates the production of two enzymes: a protein kinase and an oligoadenylate synthetase. The chain is Interferon alpha-3 from Canis lupus familiaris (Dog).